Here is an 86-residue protein sequence, read N- to C-terminus: Photosystem I reaction center subunit PsaK (86 aa).

The next 2 helical transmembrane spans lie at 14-34 and 57-77; these read LQWS…AIAF and FGLP…VGAV.

It belongs to the PsaG/PsaK family.

It localises to the cellular thylakoid membrane. The chain is Photosystem I reaction center subunit PsaK from Nostoc punctiforme (strain ATCC 29133 / PCC 73102).